The chain runs to 275 residues: UPF0758 protein RL2068 (275 aa).

The tract at residues 1–45 (MAKGPVSTSSDDELPFETQEPIAADERSFFGGQPQKPSAPNARAA) is disordered. One can recognise an MPN domain in the interval 153–275 (VLSSWSSVIQ…HVSLKGLKLI (123 aa)). Zn(2+) is bound by residues histidine 224, histidine 226, and aspartate 237. The short motif at 224–237 (HNHPSGDPTPSRAD) is the JAMM motif element.

Belongs to the UPF0758 family.

The sequence is that of UPF0758 protein RL2068 from Rhizobium johnstonii (strain DSM 114642 / LMG 32736 / 3841) (Rhizobium leguminosarum bv. viciae).